Consider the following 211-residue polypeptide: Pyridoxine/pyridoxamine 5'-phosphate oxidase (211 aa).

Residues 7–10 and Lys65 contribute to the substrate site; that span reads RREY. FMN-binding positions include 60–65, 75–76, Arg81, Lys82, and Gln104; these read RIVLLK and YT. Substrate-binding residues include Tyr122, Arg126, and Ser130. FMN contacts are provided by residues 139 to 140 and Trp184; that span reads QS. A substrate-binding site is contributed by 190 to 192; it reads RLH. Arg194 is a binding site for FMN.

This sequence belongs to the pyridoxamine 5'-phosphate oxidase family. In terms of assembly, homodimer. The cofactor is FMN.

It catalyses the reaction pyridoxamine 5'-phosphate + O2 + H2O = pyridoxal 5'-phosphate + H2O2 + NH4(+). It carries out the reaction pyridoxine 5'-phosphate + O2 = pyridoxal 5'-phosphate + H2O2. Its pathway is cofactor metabolism; pyridoxal 5'-phosphate salvage; pyridoxal 5'-phosphate from pyridoxamine 5'-phosphate: step 1/1. It functions in the pathway cofactor metabolism; pyridoxal 5'-phosphate salvage; pyridoxal 5'-phosphate from pyridoxine 5'-phosphate: step 1/1. Its function is as follows. Catalyzes the oxidation of either pyridoxine 5'-phosphate (PNP) or pyridoxamine 5'-phosphate (PMP) into pyridoxal 5'-phosphate (PLP). The chain is Pyridoxine/pyridoxamine 5'-phosphate oxidase from Vibrio vulnificus (strain CMCP6).